Here is a 174-residue protein sequence, read N- to C-terminus: UBX domain-containing protein 5 (174 aa).

The stretch at 8 to 58 (QKEKFAEDRALLSQQNKEYAESLAKDIAKKEEKDKIRFEAEQKELRKKTIQ) forms a coiled coil. The 47-residue stretch at 74-120 (RLLVRYPNGSRLILSFSPSQPMTSLFDAIILNPACPDYFSVRSVYPR) folds into the UBX domain.

Forms a complex composed of deubiquitinating enzyme atx-3, adapter ubxn-5 and cdc-48.1. Interacts with atx-3 (via C-terminus). Interacts with cdc-48.1 (via N-terminus) and cdc-48.2. As to expression, specifically expressed in the germline.

In terms of biological role, probably acts as an adapter for ATPase cdc-48.1 and/or cdc-48.2, conferring substrate specificity. Unlike other UBX domain-containing protein does not bind 'Lys-48'-polyubiquitinated chain. The chain is UBX domain-containing protein 5 from Caenorhabditis elegans.